The following is a 715-amino-acid chain: MAQGLYHEEFARAGKRAGLQVWRIEKLELVPVPESAYGNFYVGDAYLVLHTTQASRGFTYRLHFWLGKECTQDESTAAAIFTVQMDDYLGGKPVQNRELQGYESTDFVGYFKGGLKYKAGGVASGLNHVLTNDLTAQRLLHVKGRRVVRATEVPLSWDSFNKGDCFIIDLGTEIYQWCGSSCNKYERLKASQVAIGIRDNERKGRAQLIVVEEGSEPSELTKVLGEKPKLRDGEDDDDIKADITNRKMAKLYMVSDASGSMKVSLVAEENPFSMAMLLSEECFILDHGAAKQIFVWKGKDANPQERKAAMKTAEEFLQQMNYSTNTQIQVLPEGGETPIFKQFFKDWRDRDQSDGFGKVYVTEKVAHVKQIPFDASKLHSSPQMAAQHHVVDDGSGKVQIWRVENNGRVEIDRNSYGEFYGGDCYIILYTYPRGQIIYTWQGANATRDELTTSAFLTVQLDRSLGGQAVQIRVSQGKEPAHLLSLFKDKPLIIYKNGTSKKEGQAPAPPIRLFQVRRNLASITRIMEVDVDANSLNSNDVFVLKLRQNNGYIWIGKGSTQEEEKGAEYVASVLKCKTSTIQEGKEPEEFWNSLGGKKDYQTSPLLESQAEDHPPRLYGCSNKTGRFIIEEVPGEFTQDDLAEDDVMLLDAWEQIFIWIGKDANEVEKSESLKSAKIYLETDPSGRDKRTPIVIIKQGHEPPTFTGWFLGWDSSRW.

Residues M1–E363 form an actin-severing region. The Gelsolin-like 1 repeat unit spans residues L27 to A77. Y102 carries the post-translational modification Phosphotyrosine. A 1,2-diacyl-sn-glycero-3-phospho-(1D-myo-inositol-4,5-bisphosphate) is bound by residues K112–A119 and R138–R146. Gelsolin-like repeat units lie at residues V148–L188, L265–K307, V398–T451, and T523–K564. The segment at K364 to W715 is actin-binding, Ca-sensitive. Residues K364–W715 are ca(2+)-dependent actin binding. Ca(2+) is bound by residues N538, D539, and E562. At Y599 the chain carries Phosphotyrosine. A Gelsolin-like 6 repeat occupies F626 to S668. Ca(2+) is bound by residues D643, D644, and E666.

This sequence belongs to the villin/gelsolin family. The N-terminus is blocked. In the adrenal gland, expressed in the medulla but, in the cortex, found only in diffuse parts.

The protein resides in the cytoplasm. It localises to the cytoskeleton. The protein localises to the cell projection. Its subcellular location is the podosome. Its function is as follows. Ca(2+)-dependent actin filament-severing protein that has a regulatory function in exocytosis by affecting the organization of the microfilament network underneath the plasma membrane. In vitro, also has barbed end capping and nucleating activities in the presence of Ca(2+). Severing activity is inhibited by phosphatidylinositol 4,5-bis-phosphate (PIP2). Required for megakaryocyte differentiation, maturation, polyploidization and apoptosis with the release of platelet-like particles. Plays a role in osteoclastogenesis (OCG) and actin cytoskeletal organization in osteoclasts. Regulates chondrocyte proliferation and differentiation. Inhibits cell proliferation and tumorigenesis. Signaling is mediated by MAPK, p38 and JNK pathways. This is Scinderin from Bos taurus (Bovine).